A 79-amino-acid chain; its full sequence is RNA-binding protein Hfq (79 aa).

Positions 10–69 (GPFLNALRKEHVPVSIYLVNGIKLQGNIESFDQYVVLLRNTVTQMVYKHAISTVVPARAV) constitute a Sm domain.

This sequence belongs to the Hfq family. Homohexamer.

Its function is as follows. RNA chaperone that binds small regulatory RNA (sRNAs) and mRNAs to facilitate mRNA translational regulation in response to envelope stress, environmental stress and changes in metabolite concentrations. Also binds with high specificity to tRNAs. The protein is RNA-binding protein Hfq of Cupriavidus necator (strain ATCC 17699 / DSM 428 / KCTC 22496 / NCIMB 10442 / H16 / Stanier 337) (Ralstonia eutropha).